Here is a 434-residue protein sequence, read N- to C-terminus: UPF0597 protein CLD_2616 (434 aa).

It belongs to the UPF0597 family.

This chain is UPF0597 protein CLD_2616, found in Clostridium botulinum (strain Okra / Type B1).